A 182-amino-acid polypeptide reads, in one-letter code: MPVAALIREEIEIPENVNVEVNGSTVAVKSGAKELKRDLLYPGIEISTEDGKVVIECTFPRKAQTAIVGTYRSHIQNMITGVTDGFEYKLVIRYAHFPMKVSAKGNTVTIDNFLGEKYTRTAKIMDGVTVKVSGEEVIVSGANKEFVGQTAANIEQATKVKGRDTRIFQDGIYIVEKAGKVL.

It belongs to the universal ribosomal protein uL6 family. Part of the 50S ribosomal subunit.

Its function is as follows. This protein binds to the 23S rRNA, and is important in its secondary structure. It is located near the subunit interface in the base of the L7/L12 stalk, and near the tRNA binding site of the peptidyltransferase center. The polypeptide is Large ribosomal subunit protein uL6 (Methanococcus maripaludis (strain C7 / ATCC BAA-1331)).